The sequence spans 61 residues: Small ribosomal subunit protein uS14 (61 aa).

4 residues coordinate Zn(2+): C24, C27, C40, and C43.

Belongs to the universal ribosomal protein uS14 family. Zinc-binding uS14 subfamily. As to quaternary structure, part of the 30S ribosomal subunit. Contacts proteins S3 and S10. Zn(2+) is required as a cofactor.

Binds 16S rRNA, required for the assembly of 30S particles and may also be responsible for determining the conformation of the 16S rRNA at the A site. The protein is Small ribosomal subunit protein uS14 of Mycoplasmopsis agalactiae (strain NCTC 10123 / CIP 59.7 / PG2) (Mycoplasma agalactiae).